The following is a 192-amino-acid chain: Neurogenic differentiation factor 1 (192 aa).

One can recognise a bHLH domain in the interval 19 to 71; sequence VRRVKANGRERARMHGLNNALDMLREYIPITTQHQKLSKIETLRLARNYIDAL. The interval 116-192 is disordered; sequence PSQFDIFSDP…SHQNTFNYSP (77 aa). A compositionally biased stretch (low complexity) spans 139–163; that stretch reads SSFSSSSPSSSCSPPQYYYSPTQPS.

Expressed in neuroblasts of the AB lineage. More specifically in precursors of the embryonic ventral cord motor neurons. Expressed to a lesser degree in the EMS lineage which generates mostly endoderm and mesoderm tissues.

Its subcellular location is the nucleus. Its function is as follows. Acts as a transcriptional regulator whose activity is required for several aspects of motor neuron fate specification, including cell division patterns, proper spatiotemporal expression of fate-specific markers, and normal axonal morphology and pathfinding. Involved in regulating glial specification. The polypeptide is Neurogenic differentiation factor 1 (cnd-1) (Caenorhabditis elegans).